Consider the following 419-residue polypeptide: Inner ear-specific collagen (419 aa).

Positions 1–19 (MDAYSLSPTDSTTYSSDTF) are cleaved as a signal peptide. A nonhelical region (NC2) region spans residues 20-57 (STEFHTDAIAPPGNTPGNYTLDYNECFFNFCECCPPEK). Asn37 carries N-linked (GlcNAc...) asparagine glycosylation. The interval 58–274 (GPMGPMGERG…RGPKGPPGES (217 aa)) is triple-helical region (COL1). The interval 63 to 275 (MGERGLPGPP…GPKGPPGESV (213 aa)) is disordered. 2 stretches are compositionally biased toward basic and acidic residues: residues 129–144 (PGEK…KGER) and 184–202 (LKGE…KGER). Residues 227–236 (GPLGGKGDTG) show a composition bias toward gly residues. The C1q domain occupies 275 to 412 (VEQIRSAFSV…GFLLYPDTKK (138 aa)). Residues 275-419 (VEQIRSAFSV…TKKPTAMENL (145 aa)) form a nonhelical region (NC1) region. Residue Asn320 is glycosylated (N-linked (GlcNAc...) asparagine).

In terms of tissue distribution, specialized secretory supporting cells at the outer perimeter of the saccular epithelium.

It localises to the secreted. The protein localises to the extracellular space. Its subcellular location is the extracellular matrix. Functionally, forms a microstructural matrix within the otolithic membrane. In Lepomis macrochirus (Bluegill), this protein is Inner ear-specific collagen.